The sequence spans 368 residues: MINLGDKQSIIVVAMSGGVDSAAVAAMLHAQGYNVIGITLQLYDHGMAVGKKNACCAGQDIYDAKMVANKLGIPHYVLDYESKFKESVIENFVDSYLQGETPLPCVQCNKSVKFKDLIKTAKELGAAQLATGHYVRKINGDNGAELHIGIDPAKDQSYFLFTTTKEQLDYLSFPLGWFTKDETRKLASKFGLEVANKPDSQDICFVPDGNYKNVINKIRPGSSKKGKIIHVNGFELGEHSGIINYTIGQRRGLGIAYNEPLYVIKIDPNNNIVYVGPESALNMQEFIIKDVNWLADEIKDNEKLEVAVKIRSTRLPSLAEISKLGDDKMKVKFLSEEKAVAPGQACVIYDGERVLGGGWITRDIIITL.

ATP is bound by residues 14-21 (AMSGGVDS) and L40. The active-site Nucleophile is the C108. C108 and C204 are oxidised to a cystine. G132 is a binding site for ATP. The segment at 154–156 (KDQ) is interaction with tRNA. C204 acts as the Cysteine persulfide intermediate in catalysis.

It belongs to the MnmA/TRMU family.

Its subcellular location is the cytoplasm. The catalysed reaction is S-sulfanyl-L-cysteinyl-[protein] + uridine(34) in tRNA + AH2 + ATP = 2-thiouridine(34) in tRNA + L-cysteinyl-[protein] + A + AMP + diphosphate + H(+). Its function is as follows. Catalyzes the 2-thiolation of uridine at the wobble position (U34) of tRNA, leading to the formation of s(2)U34. The chain is tRNA-specific 2-thiouridylase MnmA from Rickettsia canadensis (strain McKiel).